The chain runs to 293 residues: Ribosomal protein L11 methyltransferase (293 aa).

Residues Thr145, Gly166, Asp188, and Asn230 each coordinate S-adenosyl-L-methionine.

The protein belongs to the methyltransferase superfamily. PrmA family.

It localises to the cytoplasm. The enzyme catalyses L-lysyl-[protein] + 3 S-adenosyl-L-methionine = N(6),N(6),N(6)-trimethyl-L-lysyl-[protein] + 3 S-adenosyl-L-homocysteine + 3 H(+). Functionally, methylates ribosomal protein L11. The chain is Ribosomal protein L11 methyltransferase from Escherichia coli O139:H28 (strain E24377A / ETEC).